Consider the following 216-residue polypeptide: DNA repair and recombination protein RadB (216 aa).

It belongs to the eukaryotic RecA-like protein family. RadB subfamily.

Functionally, involved in DNA repair and in homologous recombination. May regulate the cleavage reactions of the branch-structured DNA. Has a very weak ATPase activity that is not stimulated by DNA. Binds DNA but does not promote DNA strands exchange. In Methanococcus maripaludis (strain C5 / ATCC BAA-1333), this protein is DNA repair and recombination protein RadB.